The sequence spans 228 residues: Isoprenyl transferase (228 aa).

The active site involves Asp9. Asp9 contributes to the Mg(2+) binding site. Residues 10 to 13 (GNGR), Trp14, Arg22, His26, and 54 to 56 (STE) each bind substrate. The active-site Proton acceptor is Asn57. Residues Trp58, Arg60, Arg175, and 181-183 (RMS) contribute to the substrate site. Position 194 (Glu194) interacts with Mg(2+).

Belongs to the UPP synthase family. As to quaternary structure, homodimer. The cofactor is Mg(2+).

Functionally, catalyzes the condensation of isopentenyl diphosphate (IPP) with allylic pyrophosphates generating different type of terpenoids. This is Isoprenyl transferase from Treponema pallidum (strain Nichols).